The chain runs to 140 residues: Translation initiation factor 2 subunit beta (140 aa).

Belongs to the eIF-2-beta/eIF-5 family. Heterotrimer composed of an alpha, a beta and a gamma chain.

EIF-2 functions in the early steps of protein synthesis by forming a ternary complex with GTP and initiator tRNA. The protein is Translation initiation factor 2 subunit beta (eif2b) of Pyrococcus horikoshii (strain ATCC 700860 / DSM 12428 / JCM 9974 / NBRC 100139 / OT-3).